The following is a 399-amino-acid chain: Ribose-phosphate pyrophosphokinase 2, chloroplastic (399 aa).

Residues 1–32 constitute a chloroplast transit peptide; it reads MAAKAAALSSSPFVSSRRLSSPAASLRARTPR. Mg(2+)-binding residues include Asp-214, His-216, Asp-225, and Asp-229. The binding of phosphoribosylpyrophosphate stretch occupies residues 299–314; sequence GKVAIMVDDMIDTAGT.

The protein belongs to the ribose-phosphate pyrophosphokinase family. The cofactor is Mg(2+).

The protein localises to the plastid. The protein resides in the chloroplast. It catalyses the reaction D-ribose 5-phosphate + ATP = 5-phospho-alpha-D-ribose 1-diphosphate + AMP + H(+). This chain is Ribose-phosphate pyrophosphokinase 2, chloroplastic, found in Oryza sativa subsp. japonica (Rice).